Reading from the N-terminus, the 128-residue chain is Large-conductance mechanosensitive channel (128 aa).

2 helical membrane-spanning segments follow: residues 10 to 30 and 76 to 96; these read FAMRGNVVDMAVGVIIGGAFG and GMFIQNVFDFIIIAFAIFLMI.

Belongs to the MscL family. As to quaternary structure, homopentamer.

The protein resides in the cell inner membrane. Channel that opens in response to stretch forces in the membrane lipid bilayer. May participate in the regulation of osmotic pressure changes within the cell. This chain is Large-conductance mechanosensitive channel, found in Actinobacillus succinogenes (strain ATCC 55618 / DSM 22257 / CCUG 43843 / 130Z).